The following is a 66-amino-acid chain: Ocellatin-PT5 (66 aa).

The first 22 residues, 1 to 22 (MAFLKKSLFLVLFLGLVSLSIC), serve as a signal peptide directing secretion. The propeptide occupies 23–39 (DEEKRQDEDDDDDDDEE). At Val-66 the chain carries Valine amide.

In terms of tissue distribution, expressed by the skin glands.

The protein localises to the secreted. Has antibacterial activity against Gram-negative bacterium E.coli ATCC 25922 (MIC=300 uM) but not against S.pneumoniae ATCC 700603, S.choleraesuis ATCC 14028 or Gram-positive bacterium S.aureus ATCC 29313. Shows very little hemolytic activity and no cytotoxicity. In Leptodactylus pustulatus (Ceara white-lipped frog), this protein is Ocellatin-PT5.